Consider the following 259-residue polypeptide: Deoxyribose-phosphate aldolase (259 aa).

The active-site Proton donor/acceptor is Asp102. Lys167 functions as the Schiff-base intermediate with acetaldehyde in the catalytic mechanism. Lys201 serves as the catalytic Proton donor/acceptor.

It belongs to the DeoC/FbaB aldolase family. DeoC type 2 subfamily.

It localises to the cytoplasm. It catalyses the reaction 2-deoxy-D-ribose 5-phosphate = D-glyceraldehyde 3-phosphate + acetaldehyde. The protein operates within carbohydrate degradation; 2-deoxy-D-ribose 1-phosphate degradation; D-glyceraldehyde 3-phosphate and acetaldehyde from 2-deoxy-alpha-D-ribose 1-phosphate: step 2/2. In terms of biological role, catalyzes a reversible aldol reaction between acetaldehyde and D-glyceraldehyde 3-phosphate to generate 2-deoxy-D-ribose 5-phosphate. The protein is Deoxyribose-phosphate aldolase of Proteus mirabilis (strain HI4320).